Consider the following 154-residue polypeptide: Superoxide dismutase [Cu-Zn] (154 aa).

Cu cation-binding residues include H47, H49, and H64. Cysteines 58 and 147 form a disulfide. Zn(2+)-binding residues include H64, H72, H81, and D84. H121 contacts Cu cation.

Belongs to the Cu-Zn superoxide dismutase family. Homodimer. The cofactor is Cu cation. Requires Zn(2+) as cofactor.

The protein localises to the cytoplasm. It catalyses the reaction 2 superoxide + 2 H(+) = H2O2 + O2. Functionally, destroys radicals which are normally produced within the cells and which are toxic to biological systems. The chain is Superoxide dismutase [Cu-Zn] (SODCC) from Pinus sylvestris (Scotch pine).